Consider the following 139-residue polypeptide: Chlorosome protein C (139 aa).

The protein localises to the chlorosome. The polypeptide is Chlorosome protein C (csmC) (Chlorobaculum tepidum (strain ATCC 49652 / DSM 12025 / NBRC 103806 / TLS) (Chlorobium tepidum)).